The following is a 167-amino-acid chain: S-ribosylhomocysteine lyase (167 aa).

Fe cation is bound by residues H54, H58, and C128.

Belongs to the LuxS family. In terms of assembly, homodimer. It depends on Fe cation as a cofactor.

It carries out the reaction S-(5-deoxy-D-ribos-5-yl)-L-homocysteine = (S)-4,5-dihydroxypentane-2,3-dione + L-homocysteine. Functionally, involved in the synthesis of autoinducer 2 (AI-2) which is secreted by bacteria and is used to communicate both the cell density and the metabolic potential of the environment. The regulation of gene expression in response to changes in cell density is called quorum sensing. Catalyzes the transformation of S-ribosylhomocysteine (RHC) to homocysteine (HC) and 4,5-dihydroxy-2,3-pentadione (DPD). The protein is S-ribosylhomocysteine lyase of Haemophilus influenzae (strain PittEE).